The primary structure comprises 187 residues: MKNCMMADQRGRSILKHQPVVGDEVLEFSRGLAPSTFGFRYAAYMDRNHFLPSGRAAVKHIADPTLAYVMMRHRQCHDFLHVITGCGRSVEEELAVKVFEWKHTGLPLGLLSLLGGASRLSATQLAHMRLFWEWASHNAPCSRHDKPAVPMYLNVPWEDMLAKEYDEVAAYTGITPLPVFLKKHQKQ.

Zn(2+)-binding residues include His77, Asp78, His81, and Glu93.

It belongs to the COQ4 family. As to quaternary structure, component of a multi-subunit COQ enzyme complex. The cofactor is Zn(2+).

Its subcellular location is the mitochondrion inner membrane. It carries out the reaction a 4-hydroxy-3-methoxy-5-(all-trans-polyprenyl)benzoate + H(+) = a 2-methoxy-6-(all-trans-polyprenyl)phenol + CO2. Its pathway is cofactor biosynthesis; ubiquinone biosynthesis. Lyase that catalyzes the C1-decarboxylation of 4-hydroxy-3-methoxy-5-(all-trans-polyprenyl)benzoic acid into 2-methoxy-6-(all-trans-polyprenyl)phenol during ubiquinone biosynthesis. This chain is Ubiquinone biosynthesis protein COQ4 homolog, mitochondrial, found in Leishmania braziliensis.